The primary structure comprises 132 residues: Small ribosomal subunit protein uS8 (132 aa).

The protein belongs to the universal ribosomal protein uS8 family. As to quaternary structure, part of the 30S ribosomal subunit. Contacts proteins S5 and S12.

Its function is as follows. One of the primary rRNA binding proteins, it binds directly to 16S rRNA central domain where it helps coordinate assembly of the platform of the 30S subunit. The polypeptide is Small ribosomal subunit protein uS8 (Mycobacterium marinum (strain ATCC BAA-535 / M)).